A 329-amino-acid polypeptide reads, in one-letter code: DNA-directed RNA polymerase subunit alpha (329 aa).

The tract at residues 1–234 (MQGSVTEFLK…EQLDAFVELR (234 aa)) is alpha N-terminal domain (alpha-NTD). Residues 248-329 (FDPILLRPVD…WPPASLVDDL (82 aa)) are alpha C-terminal domain (alpha-CTD).

Belongs to the RNA polymerase alpha chain family. In terms of assembly, homodimer. The RNAP catalytic core consists of 2 alpha, 1 beta, 1 beta' and 1 omega subunit. When a sigma factor is associated with the core the holoenzyme is formed, which can initiate transcription.

The catalysed reaction is RNA(n) + a ribonucleoside 5'-triphosphate = RNA(n+1) + diphosphate. In terms of biological role, DNA-dependent RNA polymerase catalyzes the transcription of DNA into RNA using the four ribonucleoside triphosphates as substrates. In Shewanella denitrificans (strain OS217 / ATCC BAA-1090 / DSM 15013), this protein is DNA-directed RNA polymerase subunit alpha.